The chain runs to 618 residues: uncharacterized protein (618 aa).

A DNA-binding region (zn(2)-C6 fungal-type) is located at residues 18–47 (SCQRCRQRKIKCDRLHPCFQCVKSNSQCFY). Ser-598 bears the Phosphoserine mark.

The protein localises to the nucleus. This is an uncharacterized protein from Schizosaccharomyces pombe (strain 972 / ATCC 24843) (Fission yeast).